The primary structure comprises 244 residues: 1-(5-phosphoribosyl)-5-[(5-phosphoribosylamino)methylideneamino] imidazole-4-carboxamide isomerase (244 aa).

The Proton acceptor role is filled by D9. D131 (proton donor) is an active-site residue.

Belongs to the HisA/HisF family.

It localises to the cytoplasm. The enzyme catalyses 1-(5-phospho-beta-D-ribosyl)-5-[(5-phospho-beta-D-ribosylamino)methylideneamino]imidazole-4-carboxamide = 5-[(5-phospho-1-deoxy-D-ribulos-1-ylimino)methylamino]-1-(5-phospho-beta-D-ribosyl)imidazole-4-carboxamide. The protein operates within amino-acid biosynthesis; L-histidine biosynthesis; L-histidine from 5-phospho-alpha-D-ribose 1-diphosphate: step 4/9. In Campylobacter jejuni subsp. doylei (strain ATCC BAA-1458 / RM4099 / 269.97), this protein is 1-(5-phosphoribosyl)-5-[(5-phosphoribosylamino)methylideneamino] imidazole-4-carboxamide isomerase.